The sequence spans 168 residues: Protein B-Myc (168 aa).

Disordered regions lie at residues 26–94 (DDEE…DLPE) and 146–168 (EGAS…TCNT). Phosphoserine occurs at positions 59 and 67.

Its subcellular location is the nucleus. Its function is as follows. Seems to act as an inhibitor of cellular proliferation. In Rattus norvegicus (Rat), this protein is Protein B-Myc (Mycb).